The chain runs to 306 residues: GTPase IMAP family member 1 (306 aa).

The disordered stretch occupies residues 1–21 (MGGRKMATDEENVYGLEENAQ). Over 1 to 272 (MGGRKMATDE…RLWKWLKSPR (272 aa)) the chain is Cytoplasmic. In terms of domain architecture, AIG1-type G spans 25 to 229 (ESTRRLILVG…YSNEVYELAQ (205 aa)). Residues 34-41 (GRTGAGKS) are G1. GTP is bound by residues 34 to 42 (GRTGAGKSA) and Ser-55. The interval 61–65 (SVTRA) is G2. The segment at 82–85 (DTPD) is G3. A G4 region spans residues 152-155 (TRKE). GTP-binding positions include 153 to 155 (RKE) and Asn-190. The G5 stretch occupies residues 189–191 (DNR). Residues 273–292 (SWRLGLALLLGGALLFWVLL) form a helical; Anchor for type IV membrane protein membrane-spanning segment. The Lumenal segment spans residues 293–306 (HRRWSEAVAEVGPD).

It belongs to the TRAFAC class TrmE-Era-EngA-EngB-Septin-like GTPase superfamily. AIG1/Toc34/Toc159-like paraseptin GTPase family. IAN subfamily. Predominantly expressed in the spleen and to a lesser extent in the lymph nodes. Detected in T-cells.

Its subcellular location is the endoplasmic reticulum membrane. It localises to the golgi apparatus membrane. Its function is as follows. May regulate lymphocyte survival. Required for normal levels of mature T-lymphocytes and mature B-cells. The chain is GTPase IMAP family member 1 (GIMAP1) from Homo sapiens (Human).